Here is a 389-residue protein sequence, read N- to C-terminus: Curcumin synthase 1 (389 aa).

Residue Cys164 is part of the active site.

Belongs to the thiolase-like superfamily. Chalcone/stilbene synthases family. As to quaternary structure, homodimer. As to expression, expressed in both the leaf and rhizome, with higher expression in the rhizome.

The enzyme catalyses (E)-feruloylacetyl-CoA + (E)-feruloyl-CoA + H2O = curcumin + CO2 + 2 CoA. Its pathway is secondary metabolite biosynthesis; flavonoid biosynthesis. In terms of biological role, catalyzes the synthesis of curcumin by condensing feruloyl-CoA with a diketide-CoA in the curcuminoid biosynthesis. The polypeptide is Curcumin synthase 1 (CURS1) (Curcuma longa (Turmeric)).